Consider the following 642-residue polypeptide: Threonine--tRNA ligase (642 aa).

Positions 1–61 constitute a TGS domain; it reads MPVITLPDGS…DTDAQLAIIT (61 aa). A catalytic region spans residues 243 to 534; the sequence is DHRKIGKQLD…LTEEFAGFFP (292 aa). C334, H385, and H511 together coordinate Zn(2+).

The protein belongs to the class-II aminoacyl-tRNA synthetase family. As to quaternary structure, homodimer. Zn(2+) serves as cofactor.

It localises to the cytoplasm. The enzyme catalyses tRNA(Thr) + L-threonine + ATP = L-threonyl-tRNA(Thr) + AMP + diphosphate + H(+). Functionally, catalyzes the attachment of threonine to tRNA(Thr) in a two-step reaction: L-threonine is first activated by ATP to form Thr-AMP and then transferred to the acceptor end of tRNA(Thr). Also edits incorrectly charged L-seryl-tRNA(Thr). The chain is Threonine--tRNA ligase from Pectobacterium atrosepticum (strain SCRI 1043 / ATCC BAA-672) (Erwinia carotovora subsp. atroseptica).